A 358-amino-acid polypeptide reads, in one-letter code: Probable undecaprenyl-phosphate N-acetylglucosaminyl 1-phosphate transferase (358 aa).

The next 11 membrane-spanning stretches (helical) occupy residues 10–32 (VVAF…RIAI), 53–72 (MGGL…SGIY), 76–93 (RMTA…LGIL), 105–127 (FLIQ…FFSV), 137–157 (GWMA…AINL), 164–181 (LAAG…VMAL), 186–205 (VLIL…FLFY), 218–235 (GSLF…LGLY), 240–262 (LFSI…FAII), 292–311 (MSVL…AIVL), and 316–338 (IWLS…EVTG).

Belongs to the glycosyltransferase 4 family. Mg(2+) is required as a cofactor. The cofactor is Mn(2+).

The protein localises to the cell membrane. It carries out the reaction di-trans,octa-cis-undecaprenyl phosphate + UDP-N-acetyl-alpha-D-glucosamine = N-acetyl-alpha-D-glucosaminyl-di-trans,octa-cis-undecaprenyl diphosphate + UMP. The protein operates within cell wall biogenesis; poly(glucopyranosyl N-acetylgalactosamine 1-phosphate) teichoic acid biosynthesis. It functions in the pathway cell wall biogenesis; poly(glycerol phosphate) teichoic acid biosynthesis. Catalyzes the formation of undecaprenyl-PP-N-acetylglucosamine. Involved in the synthesis of anionic cell-wall polymers as it mediates the initiation of the linkage unit formation that appears to be common to the two types of teichoic acids attached to the peptidoglycan of B.subtilis; may also be involved in teichuronic acid biosynthesis. This chain is Probable undecaprenyl-phosphate N-acetylglucosaminyl 1-phosphate transferase (tagO), found in Bacillus subtilis (strain 168).